The chain runs to 268 residues: Hydroxyethylthiazole kinase (268 aa).

A substrate-binding site is contributed by methionine 49. Residues lysine 124 and threonine 168 each coordinate ATP. Alanine 195 serves as a coordination point for substrate.

The protein belongs to the Thz kinase family. Mg(2+) is required as a cofactor.

It catalyses the reaction 5-(2-hydroxyethyl)-4-methylthiazole + ATP = 4-methyl-5-(2-phosphooxyethyl)-thiazole + ADP + H(+). The protein operates within cofactor biosynthesis; thiamine diphosphate biosynthesis; 4-methyl-5-(2-phosphoethyl)-thiazole from 5-(2-hydroxyethyl)-4-methylthiazole: step 1/1. In terms of biological role, catalyzes the phosphorylation of the hydroxyl group of 4-methyl-5-beta-hydroxyethylthiazole (THZ). The protein is Hydroxyethylthiazole kinase of Archaeoglobus fulgidus (strain ATCC 49558 / DSM 4304 / JCM 9628 / NBRC 100126 / VC-16).